Consider the following 338-residue polypeptide: Nucleoid-associated protein VSAL_I1059 (338 aa).

A disordered region spans residues 319 to 338; that stretch reads KGTPPNLKDQLTRRLGSSES.

The protein belongs to the YejK family.

Its subcellular location is the cytoplasm. The protein resides in the nucleoid. The chain is Nucleoid-associated protein VSAL_I1059 from Aliivibrio salmonicida (strain LFI1238) (Vibrio salmonicida (strain LFI1238)).